The chain runs to 127 residues: Large ribosomal subunit protein bL20c (127 aa).

It belongs to the bacterial ribosomal protein bL20 family.

It is found in the plastid. Its subcellular location is the chloroplast. Its function is as follows. Binds directly to 23S ribosomal RNA and is necessary for the in vitro assembly process of the 50S ribosomal subunit. It is not involved in the protein synthesizing functions of that subunit. The chain is Large ribosomal subunit protein bL20c from Jasminum nudiflorum (Winter jasmine).